Reading from the N-terminus, the 388-residue chain is Purple acid phosphatase 19 (388 aa).

The first 24 residues, 1–24 (MGLNHLTLVCSAIALLSIFVVSQA), serve as a signal peptide directing secretion. N-linked (GlcNAc...) asparagine glycans are attached at residues Asn97 and Asn111. Asp145 and Tyr148 together coordinate Fe cation. Asp145 lines the Zn(2+) pocket. Asn182 contributes to the Zn(2+) binding site. Asn182 is a binding site for substrate. A glycan (N-linked (GlcNAc...) asparagine) is linked at Asn226. Position 238 (His238) interacts with Zn(2+). Residue His248 is the Proton donor of the active site. Zn(2+) is bound at residue His275. 275 to 277 (HVH) lines the substrate pocket. His277 contacts Fe cation. Asn291 and Asn348 each carry an N-linked (GlcNAc...) asparagine glycan.

Belongs to the metallophosphoesterase superfamily. Purple acid phosphatase family. In terms of assembly, homodimer. It depends on Fe cation as a cofactor. Zn(2+) serves as cofactor. As to expression, specifically expressed in flowers.

The protein localises to the secreted. It catalyses the reaction a phosphate monoester + H2O = an alcohol + phosphate. This chain is Purple acid phosphatase 19 (PAP19), found in Arabidopsis thaliana (Mouse-ear cress).